The primary structure comprises 497 residues: O-acetyltransferase PaAT-1 (497 aa).

Asparagine 35 carries N-linked (GlcNAc...) asparagine glycosylation. 9 helical membrane passes run glycine 69 to isoleucine 89, leucine 107 to serine 127, leucine 157 to tyrosine 177, leucine 241 to phenylalanine 261, valine 278 to isoleucine 298, alanine 329 to phenylalanine 349, proline 375 to phenylalanine 395, isoleucine 406 to glycine 426, and valine 443 to valine 463.

Belongs to the acyltransferase 3 family.

It is found in the membrane. The protein operates within mycotoxin biosynthesis. In terms of biological role, O-acetyltransferase; part of the 2 gene clusters that mediate the biosynthesis of fusicoccins, diterpene glucosides that display phytohormone-like activity and function as potent activators of plasma membrane H(+)-ATPases in plants by modifying 14-3-3 proteins and cause the plant disease constriction canker. The first step in the pathway is performed by the fusicoccadiene synthase PaFS that possesses both prenyl transferase and terpene cyclase activity, converting isopentenyl diphosphate and dimethylallyl diphosphate into geranylgeranyl diphosphate (GGDP) and successively converting GGDP into fusicocca-2,10(14)-diene, a precursor for fusicoccin H. The second step is the oxidation at the C-8 position by the cytochrome P450 monooxygenase PaP450-2 to yield fusicocca-2,10(14)-diene-8-beta-ol. The cytochrome P450 monooxygenase PaP450-1 then catalyzes the hydroxylation at the C-16 position to produce fusicocca-2,10(14)-diene-8-beta,16-diol. The dioxygenase fc-dox then catalyzes the 16-oxydation of fusicocca-2,10(14)-diene-8-beta,16-diol to yield an aldehyde (8-beta-hydroxyfusicocca-1,10(14)-dien-16-al). The short-chain dehydrogenase/reductase fc-sdr catalyzes the reduction of the aldehyde to yield fusicocca-1,10(14)-diene-8-beta,16-diol. The next step is the hydroxylation at C-9 performed by the cytochrome P450 monooxygenase PaP450-3 that leads to fusicoccin H aglycon which is glycosylated to fusicoccin H by the O-glycosyltransferase PaGT. Hydroxylation at C-12 by the cytochrome P450 monooxygenase PaP450-4 leads then to the production of fusicoccin Q and is followed by methylation by the O-methyltransferase PaMT to yield fusicoccin P. Fusicoccin P is further converted to fusicoccin J via prenylation by the O-glucose prenyltransferase PaPT. Cytochrome P450 monooxygenase PaP450-5 then performs hydroxylation at C-19 to yield dideacetyl-fusicoccin A which is acetylated to 3'-O-deacetyl-fusicoccin A by the O-acetyltransferase PaAT-2. Finally, a another acetylation by the O-acetyltransferase PaAT-1 yields fusicoccin A. This chain is O-acetyltransferase PaAT-1, found in Phomopsis amygdali (Fusicoccum amygdali).